Here is a 282-residue protein sequence, read N- to C-terminus: Elongation factor Ts (282 aa).

The involved in Mg(2+) ion dislocation from EF-Tu stretch occupies residues 79 to 82 (TDFV).

This sequence belongs to the EF-Ts family.

The protein resides in the cytoplasm. Associates with the EF-Tu.GDP complex and induces the exchange of GDP to GTP. It remains bound to the aminoacyl-tRNA.EF-Tu.GTP complex up to the GTP hydrolysis stage on the ribosome. This is Elongation factor Ts from Shewanella loihica (strain ATCC BAA-1088 / PV-4).